The primary structure comprises 387 residues: GTPase Obg (387 aa).

One can recognise an Obg domain in the interval 1-159 (MKFVDEAIIR…RSLKLELLLL (159 aa)). The OBG-type G domain maps to 160 to 333 (ADVGLLGMPN…LAVKLLDFIA (174 aa)). Residues 166 to 173 (GMPNAGKS), 191 to 195 (FTTLV), 213 to 216 (DIPG), 283 to 286 (NKAD), and 314 to 316 (SAY) each bind GTP. Mg(2+) is bound by residues Ser-173 and Thr-193.

It belongs to the TRAFAC class OBG-HflX-like GTPase superfamily. OBG GTPase family. As to quaternary structure, monomer. The cofactor is Mg(2+).

It localises to the cytoplasm. Functionally, an essential GTPase which binds GTP, GDP and possibly (p)ppGpp with moderate affinity, with high nucleotide exchange rates and a fairly low GTP hydrolysis rate. Plays a role in control of the cell cycle, stress response, ribosome biogenesis and in those bacteria that undergo differentiation, in morphogenesis control. This is GTPase Obg from Shewanella halifaxensis (strain HAW-EB4).